The sequence spans 397 residues: Tryptophan synthase beta chain (397 aa).

Lysine 91 is subject to N6-(pyridoxal phosphate)lysine.

The protein belongs to the TrpB family. In terms of assembly, tetramer of two alpha and two beta chains. Pyridoxal 5'-phosphate is required as a cofactor.

It catalyses the reaction (1S,2R)-1-C-(indol-3-yl)glycerol 3-phosphate + L-serine = D-glyceraldehyde 3-phosphate + L-tryptophan + H2O. Its pathway is amino-acid biosynthesis; L-tryptophan biosynthesis; L-tryptophan from chorismate: step 5/5. The beta subunit is responsible for the synthesis of L-tryptophan from indole and L-serine. This chain is Tryptophan synthase beta chain, found in Bacillus cereus (strain G9842).